A 417-amino-acid chain; its full sequence is Cysteate synthase (417 aa).

K104 bears the N6-(pyridoxal phosphate)lysine mark. Residues N131 and T371 each contribute to the pyridoxal 5'-phosphate site.

This sequence belongs to the threonine synthase family. Cysteate synthase subfamily. Homotrimer. The cofactor is pyridoxal 5'-phosphate.

The catalysed reaction is O-phospho-L-serine + sulfite + H(+) = L-cysteate + phosphate. The protein operates within cofactor biosynthesis; coenzyme M biosynthesis. Functionally, specifically catalyzes the beta-elimination of phosphate from L-phosphoserine and the beta-addition of sulfite to the dehydroalanine intermediate to produce L-cysteate. The chain is Cysteate synthase from Methanococcoides burtonii (strain DSM 6242 / NBRC 107633 / OCM 468 / ACE-M).